Here is a 376-residue protein sequence, read N- to C-terminus: Protein-glutamate methylesterase/protein-glutamine glutaminase 1 (376 aa).

The region spanning 4-121 (KVLVVDDSSF…ARNRDEAVSL (118 aa)) is the Response regulatory domain. At D55 the chain carries 4-aspartylphosphate. The disordered stretch occupies residues 138-174 (RPVASSTPVQERPQSTLNRPTTGLRREAPAQAPVSRA). The span at 141 to 158 (ASSTPVQERPQSTLNRPT) shows a compositional bias: polar residues. The 194-residue stretch at 183 to 376 (SGKKYQLTAI…ERMLVEVGLA (194 aa)) folds into the CheB-type methylesterase domain. Residues S195, H222, and D318 contribute to the active site.

The protein belongs to the CheB family. Phosphorylated by CheA. Phosphorylation of the N-terminal regulatory domain activates the methylesterase activity.

The protein resides in the cytoplasm. The catalysed reaction is [protein]-L-glutamate 5-O-methyl ester + H2O = L-glutamyl-[protein] + methanol + H(+). It carries out the reaction L-glutaminyl-[protein] + H2O = L-glutamyl-[protein] + NH4(+). Functionally, involved in chemotaxis. Part of a chemotaxis signal transduction system that modulates chemotaxis in response to various stimuli. Catalyzes the demethylation of specific methylglutamate residues introduced into the chemoreceptors (methyl-accepting chemotaxis proteins or MCP) by CheR. Also mediates the irreversible deamidation of specific glutamine residues to glutamic acid. This Vibrio vulnificus (strain CMCP6) protein is Protein-glutamate methylesterase/protein-glutamine glutaminase 1.